The sequence spans 406 residues: Lysine-specific demethylase 8 (406 aa).

The span at 143 to 152 shows a compositional bias: basic and acidic residues; sequence KAERSEEPFS. The segment at 143 to 162 is disordered; sequence KAERSEEPFSKKRKHDCKSE. The JmjC domain maps to 270–406; it reads DQVPELKEDI…LSFSVSFWWS (137 aa). Positions 311 and 313 each coordinate Fe cation.

Requires Fe(2+) as cofactor.

It is found in the nucleus. It catalyses the reaction N(6),N(6)-dimethyl-L-lysyl(36)-[histone H3] + 2 2-oxoglutarate + 2 O2 = L-lysyl(36)-[histone H3] + 2 formaldehyde + 2 succinate + 2 CO2. Functionally, histone demethylase required for G2/M phase cell cycle progression. Specifically demethylates dimethylated 'Lys-36' (H3K36me2) of histone H3, an epigenetic repressive mark, thereby acting as a transcription activator. May play a role in the regulation of the circadian clock. The polypeptide is Lysine-specific demethylase 8 (kdm8) (Danio rerio (Zebrafish)).